The primary structure comprises 93 residues: Cobalt transport protein CbiN (93 aa).

Helical transmembrane passes span 5–25 (LMLL…NHGG) and 63–83 (LLFT…LGYC).

It belongs to the CbiN family. As to quaternary structure, forms an energy-coupling factor (ECF) transporter complex composed of an ATP-binding protein (A component, CbiO), a transmembrane protein (T component, CbiQ) and 2 possible substrate-capture proteins (S components, CbiM and CbiN) of unknown stoichimetry.

Its subcellular location is the cell inner membrane. The protein operates within cofactor biosynthesis; adenosylcobalamin biosynthesis. Its function is as follows. Part of the energy-coupling factor (ECF) transporter complex CbiMNOQ involved in cobalt import. The polypeptide is Cobalt transport protein CbiN (Salmonella agona (strain SL483)).